Consider the following 577-residue polypeptide: Arginine--tRNA ligase (577 aa).

Residues 122-132 carry the 'HIGH' region motif; it reads PNVAKEMHVGH.

Belongs to the class-I aminoacyl-tRNA synthetase family. In terms of assembly, monomer.

The protein localises to the cytoplasm. The enzyme catalyses tRNA(Arg) + L-arginine + ATP = L-arginyl-tRNA(Arg) + AMP + diphosphate. This Haemophilus influenzae (strain PittEE) protein is Arginine--tRNA ligase.